Reading from the N-terminus, the 902-residue chain is Cysteine-tryptophan domain-containing zinc finger protein 3 (902 aa).

A CW-type zinc finger spans residues 21 to 74 (VLIEDNWVCCDMCHKWRLLPYGTNTSMLPKKWICSMLDWLPGMNKCDISEDETT). The Zn(2+) site is built by cysteine 30, cysteine 33, cysteine 54, and cysteine 66. Disordered regions lie at residues 131-233 (EHDQ…EDRH), 326-345 (EDNR…NENL), 420-480 (QSST…LNAD), and 537-651 (HGPT…SASP). 2 stretches are compositionally biased toward basic and acidic residues: residues 151 to 169 (KNRE…DPVS) and 193 to 203 (SHSDGGDLTEK). Over residues 204-213 (SKKHSKSKNR) the composition is skewed to basic residues. 2 stretches are compositionally biased toward basic and acidic residues: residues 214 to 233 (RGID…EDRH) and 335 to 345 (HTSKGGDNENL). Low complexity predominate over residues 421–433 (SSTVATSSSSKVS). 3 stretches are compositionally biased toward polar residues: residues 450-463 (ESVS…SNTD), 564-588 (NSAP…QIEM), and 599-611 (IDNQ…IGQD). A compositionally biased stretch (basic and acidic residues) spans 612-625 (NHSHMKEGKSEVHT). Over residues 634–648 (KNHTQLRSNVENGDS) the composition is skewed to polar residues.

As to expression, expressed in leaf sheaths, flag leaves, nodes, internodes and panicles.

Its subcellular location is the nucleus. Functionally, binds to histones H3K4me1, H3K4me2 and H3K4me3 in GST pull-down assay. May facilitate the recruitment of effectors to mediate gene expression. The sequence is that of Cysteine-tryptophan domain-containing zinc finger protein 3 from Oryza sativa subsp. japonica (Rice).